Consider the following 421-residue polypeptide: Gamma-glutamyl phosphate reductase (421 aa).

It belongs to the gamma-glutamyl phosphate reductase family.

It localises to the cytoplasm. It carries out the reaction L-glutamate 5-semialdehyde + phosphate + NADP(+) = L-glutamyl 5-phosphate + NADPH + H(+). It participates in amino-acid biosynthesis; L-proline biosynthesis; L-glutamate 5-semialdehyde from L-glutamate: step 2/2. Functionally, catalyzes the NADPH-dependent reduction of L-glutamate 5-phosphate into L-glutamate 5-semialdehyde and phosphate. The product spontaneously undergoes cyclization to form 1-pyrroline-5-carboxylate. This Pseudomonas aeruginosa (strain LESB58) protein is Gamma-glutamyl phosphate reductase.